The chain runs to 337 residues: tRNA N6-adenosine threonylcarbamoyltransferase (337 aa).

Fe cation is bound by residues His111 and His115. Residues 134-138 (LVSGG), Asp167, Gly180, and Asn272 each bind substrate. Fe cation is bound at residue Asp300.

The protein belongs to the KAE1 / TsaD family. It depends on Fe(2+) as a cofactor.

Its subcellular location is the cytoplasm. It carries out the reaction L-threonylcarbamoyladenylate + adenosine(37) in tRNA = N(6)-L-threonylcarbamoyladenosine(37) in tRNA + AMP + H(+). Functionally, required for the formation of a threonylcarbamoyl group on adenosine at position 37 (t(6)A37) in tRNAs that read codons beginning with adenine. Is involved in the transfer of the threonylcarbamoyl moiety of threonylcarbamoyl-AMP (TC-AMP) to the N6 group of A37, together with TsaE and TsaB. TsaD likely plays a direct catalytic role in this reaction. The chain is tRNA N6-adenosine threonylcarbamoyltransferase from Photorhabdus laumondii subsp. laumondii (strain DSM 15139 / CIP 105565 / TT01) (Photorhabdus luminescens subsp. laumondii).